The primary structure comprises 155 residues: Ribosomal RNA large subunit methyltransferase H (155 aa).

S-adenosyl-L-methionine-binding positions include Leu73, Gly104, and 123 to 128; that span reads LSALTL.

This sequence belongs to the RNA methyltransferase RlmH family. Homodimer.

The protein localises to the cytoplasm. It catalyses the reaction pseudouridine(1915) in 23S rRNA + S-adenosyl-L-methionine = N(3)-methylpseudouridine(1915) in 23S rRNA + S-adenosyl-L-homocysteine + H(+). In terms of biological role, specifically methylates the pseudouridine at position 1915 (m3Psi1915) in 23S rRNA. This Chromohalobacter salexigens (strain ATCC BAA-138 / DSM 3043 / CIP 106854 / NCIMB 13768 / 1H11) protein is Ribosomal RNA large subunit methyltransferase H.